A 139-amino-acid chain; its full sequence is GSK3B-interacting protein (139 aa).

Positions 41 to 45 (VNDVL) are required for PRKAR2A interaction; contributes to a protective effect against H(2)O(2)-induced apoptosis. The interval 115-139 (SPAYREAFGNALLQRLEALKRDGQS) is interaction with GSK3B and acts as a GSK3B inhibitor.

This sequence belongs to the GSKIP family. Forms a complex composed of PRKAR2A or PRKAR2B, GSK3B and GSKIP through GSKIP interaction; facilitates PKA-induced phosphorylation of GSK3B leading to GSK3B inactivation; recruits DNM1L through GSK3B for PKA-mediated phosphorylation of DNM1L; promotes beta-catenin degradation through GSK3B-induced phosphorylation of beta-catenin; stabilizes beta-catenin and enhances Wnt-induced signaling through PKA-induced phosphorylation of beta-catenin. Interacts with GSK3B; induces GSK3B-mediated phosphorylation of GSKIP and inhibits GSK3B kinase activity. In terms of processing, phosphorylated by GSK3B.

The protein resides in the cytoplasm. It is found in the nucleus. A-kinase anchoring protein for GSK3B and PKA that regulates or facilitates their kinase activity towards their targets. The ternary complex enhances Wnt-induced signaling by facilitating the GSK3B- and PKA-induced phosphorylation of beta-catenin leading to beta-catenin degradation and stabilization respectively. Upon cAMP activation, the ternary complex contributes to neuroprotection against oxidative stress-induced apoptosis by facilitating the PKA-induced phosphorylation of DML1 and PKA-induced inactivation of GSK3B. During neurite outgrowth promotes neuron proliferation; while increases beta-catenin-induced transcriptional activity through GSK3B kinase activity inhibition, reduces N-cadherin level to promote cell cycle progression. May play a role in cleft palate formation and is required for postnatal life through modulation of the activity of GSK3B during development. The polypeptide is GSK3B-interacting protein (Mus musculus (Mouse)).